The chain runs to 155 residues: Cyclic pyranopterin monophosphate synthase (155 aa).

Substrate-binding positions include 75 to 77 and 111 to 112; these read LCH and ME. Asp-126 is a catalytic residue.

The protein belongs to the MoaC family. In terms of assembly, homohexamer; trimer of dimers.

The catalysed reaction is (8S)-3',8-cyclo-7,8-dihydroguanosine 5'-triphosphate = cyclic pyranopterin phosphate + diphosphate. The protein operates within cofactor biosynthesis; molybdopterin biosynthesis. Its function is as follows. Catalyzes the conversion of (8S)-3',8-cyclo-7,8-dihydroguanosine 5'-triphosphate to cyclic pyranopterin monophosphate (cPMP). This Corynebacterium efficiens (strain DSM 44549 / YS-314 / AJ 12310 / JCM 11189 / NBRC 100395) protein is Cyclic pyranopterin monophosphate synthase.